A 493-amino-acid chain; its full sequence is Glutamyl-tRNA(Gln) amidotransferase subunit A (493 aa).

Active-site charge relay system residues include Lys79 and Ser159. The active-site Acyl-ester intermediate is Ser183.

This sequence belongs to the amidase family. GatA subfamily. As to quaternary structure, heterotrimer of A, B and C subunits.

It carries out the reaction L-glutamyl-tRNA(Gln) + L-glutamine + ATP + H2O = L-glutaminyl-tRNA(Gln) + L-glutamate + ADP + phosphate + H(+). Functionally, allows the formation of correctly charged Gln-tRNA(Gln) through the transamidation of misacylated Glu-tRNA(Gln) in organisms which lack glutaminyl-tRNA synthetase. The reaction takes place in the presence of glutamine and ATP through an activated gamma-phospho-Glu-tRNA(Gln). This Brucella ovis (strain ATCC 25840 / 63/290 / NCTC 10512) protein is Glutamyl-tRNA(Gln) amidotransferase subunit A.